A 549-amino-acid chain; its full sequence is Frizzled-7-A (549 aa).

The signal sequence occupies residues 1 to 22 (MSSTVSLLFCCLFLQLCPSAQQ). At 23–231 (YHGEKGISVP…EEEVRFARLW (209 aa)) the chain is on the extracellular side. Residues 32 to 151 (PDHGFCQPIS…HGAGEICVGQ (120 aa)) enclose the FZ domain. 5 cysteine pairs are disulfide-bonded: C37-C98, C45-C91, C82-C119, C108-C148, and C112-C136. N-linked (GlcNAc...) asparagine glycosylation is present at N51. The N-linked (GlcNAc...) asparagine glycan is linked to N152. A helical membrane pass occupies residues 232–252 (VGIWAILCCISTLFTVLTYLV). Residues 253-263 (DMRRFSYPERP) are Cytoplasmic-facing. The chain crosses the membrane as a helical span at residues 264 to 284 (IIFLSGCYFMVAVAYTAGFLL). Topologically, residues 285–311 (EERAVCVERFSEDSYRTVAQGTKKEGC) are extracellular. A helical transmembrane segment spans residues 312-332 (TILFMILYFFGMASSIWWVIL). Over 333–354 (SLTWFLSAGMKWGHEAIEANSQ) the chain is Cytoplasmic. Residues 355 to 375 (YFHLAAWAVPAVKTITILAMG) form a helical membrane-spanning segment. Over 376–398 (QVDGDVLSGVCYVGINSVDSLRG) the chain is Extracellular. A helical transmembrane segment spans residues 399 to 419 (FVLAPLFVYLFIGTSFLLAGF). Topologically, residues 420–445 (VSLFRIRTIMKHDGTKTEKLEKLMVR) are cytoplasmic. The chain crosses the membrane as a helical span at residues 446–466 (IGVFSVMYTVPATIVLACYFY). Residues 467–503 (EQAFRDTWEKTWLVQTCKGYAVPCPNYNFAPMSPDFT) lie on the Extracellular side of the membrane. The chain crosses the membrane as a helical span at residues 504-524 (VFMIKYLMTMIVGITSSFWIW). Residues 525–549 (SGKTLQSWRRFYHRLSNGSKGETAV) lie on the Cytoplasmic side of the membrane. Residues 527 to 532 (KTLQSW) carry the Lys-Thr-X-X-X-Trp motif, mediates interaction with the PDZ domain of Dvl family members motif. The PDZ-binding motif lies at 547–549 (TAV).

Belongs to the G-protein coupled receptor Fz/Smo family. In terms of assembly, interacts with wnt11 and sdc4. The extracellular domain interacts with the extracellular domain of pcdh8/papc. Expressed in the animal region of cleavage stage embryos. During gastrulation, broadly expressed on the dorsal side of the embryo in deep mesodermal cells surrounding the blastopore lip and in presumptive anterior neuroectoderm. During neurulation, becomes progressively more restricted to the dorsal epidermis, neural plate, and neural tube. Expressed in the cranial neural crest of neurulae and tailbud embryos as well as the pronephros of tailbud embryos. Localized to the brain of neurulae, tailbud embryos and tadpoles. In tadpoles, strongly expressed in the eye and developing heart.

The protein localises to the cell membrane. The protein resides in the endosome membrane. Receptor for Wnt proteins. Acts in both canonical and non-canonical Wnt pathways. Although different papers report differing Wnt preferences, wnt5a, wnt8b and wnt11 have been proposed as synergists. In the canonical Wnt pathway, acts via beta-catenin to promote the expression of the dorsal genes siamois, twin and nodal3 and to establish the dorsal axis of the embryo and induce dorsal mesoderm formation. In a non-canonical Wnt/planar cell polarity (PCP) pathway, acts with sdc4 and dvl2/dsh to regulate convergent extension cell movements during gastrulation. Triggers phosphorylation of dvl2/dsh and its translocation to the plasma membrane. In a third branch of Wnt signaling, acts in a non-canonical pathway via trimeric G proteins, and independently of dvl2/dsh, to recruit protein kinase C (PKC) to the membrane and thus activate PKC. PKC signaling controls cell sorting and tissue separation during gastrulation. This chain is Frizzled-7-A (fzd7-a), found in Xenopus laevis (African clawed frog).